The chain runs to 226 residues: ATP synthase subunit a (226 aa).

The next 6 membrane-spanning stretches (helical) occupy residues 22 to 42 (SMNWLFMMLPIIIFPSIFWLI), 73 to 93 (IIIFISLMLYIMITNIFSLIP), 102 to 122 (LLLNMILSLTLWFSFLIYLIY), 135 to 155 (LNSPVFLMNFMVIIELISLII), 173 to 193 (LILTLLGIFISNFISILPINL), and 202 to 222 (LEIFMSMIQSYVFSILLILYF).

It belongs to the ATPase A chain family. F-type ATPases have 2 components, CF(1) - the catalytic core - and CF(0) - the membrane proton channel. CF(1) has five subunits: alpha(3), beta(3), gamma(1), delta(1), epsilon(1). CF(0) has three main subunits: a, b and c.

It localises to the mitochondrion inner membrane. Functionally, mitochondrial membrane ATP synthase (F(1)F(0) ATP synthase or Complex V) produces ATP from ADP in the presence of a proton gradient across the membrane which is generated by electron transport complexes of the respiratory chain. F-type ATPases consist of two structural domains, F(1) - containing the extramembraneous catalytic core and F(0) - containing the membrane proton channel, linked together by a central stalk and a peripheral stalk. During catalysis, ATP synthesis in the catalytic domain of F(1) is coupled via a rotary mechanism of the central stalk subunits to proton translocation. Key component of the proton channel; it may play a direct role in the translocation of protons across the membrane. The protein is ATP synthase subunit a (ATP6) of Apis mellifera ligustica (Common honeybee).